We begin with the raw amino-acid sequence, 342 residues long: Protein-glutamate methylesterase/protein-glutamine glutaminase 4 (342 aa).

Positions 2–119 (NIGIVNDLPL…GGSADPSQPL (118 aa)) constitute a Response regulatory domain. The residue at position 53 (D53) is a 4-aspartylphosphate. The 194-residue stretch at 144 to 337 (PAPQGALPPL…DQLISLVQRN (194 aa)) folds into the CheB-type methylesterase domain. Active-site residues include S159, H186, and D279.

Belongs to the CheB family. Post-translationally, phosphorylated by CheA. Phosphorylation of the N-terminal regulatory domain activates the methylesterase activity.

The protein localises to the cytoplasm. The enzyme catalyses [protein]-L-glutamate 5-O-methyl ester + H2O = L-glutamyl-[protein] + methanol + H(+). It catalyses the reaction L-glutaminyl-[protein] + H2O = L-glutamyl-[protein] + NH4(+). Its function is as follows. Involved in chemotaxis. Part of a chemotaxis signal transduction system that modulates chemotaxis in response to various stimuli. Catalyzes the demethylation of specific methylglutamate residues introduced into the chemoreceptors (methyl-accepting chemotaxis proteins or MCP) by CheR. Also mediates the irreversible deamidation of specific glutamine residues to glutamic acid. The chain is Protein-glutamate methylesterase/protein-glutamine glutaminase 4 from Burkholderia thailandensis (strain ATCC 700388 / DSM 13276 / CCUG 48851 / CIP 106301 / E264).